We begin with the raw amino-acid sequence, 108 residues long: Phosphocarrier protein HPr (108 aa).

One can recognise an HPr domain in the interval 21–108 (ELQATCIVKN…DAFSSGFGEL (88 aa)). The Pros-phosphohistidine intermediate role is filled by His35.

It belongs to the HPr family.

Its subcellular location is the cytoplasm. General (non sugar-specific) component of the phosphoenolpyruvate-dependent sugar phosphotransferase system (sugar PTS). This major carbohydrate active-transport system catalyzes the phosphorylation of incoming sugar substrates concomitantly with their translocation across the cell membrane. The phosphoryl group from phosphoenolpyruvate (PEP) is transferred to the phosphoryl carrier protein HPr by enzyme I. Phospho-HPr then transfers it to the PTS EIIA domain. This is Phosphocarrier protein HPr (ptsH) from Chlamydia pneumoniae (Chlamydophila pneumoniae).